Here is a 224-residue protein sequence, read N- to C-terminus: UPF0758 protein Tbd_2588 (224 aa).

Residues 102-224 (ALSSPAAVRD…ALSFAEAGHL (123 aa)) form the MPN domain. Zn(2+) contacts are provided by H173, H175, and D186. Residues 173–186 (HNHPSGVNEPSQAD) carry the JAMM motif motif.

It belongs to the UPF0758 family.

This is UPF0758 protein Tbd_2588 from Thiobacillus denitrificans (strain ATCC 25259 / T1).